The sequence spans 80 residues: Cell division protein ZapB (80 aa).

Positions 3-80 (FEVLEQLEAK…NLLGKMDDVE (78 aa)) form a coiled coil.

This sequence belongs to the ZapB family. Homodimer. The ends of the coiled-coil dimer bind to each other, forming polymers. Interacts with FtsZ.

Its subcellular location is the cytoplasm. Its function is as follows. Non-essential, abundant cell division factor that is required for proper Z-ring formation. It is recruited early to the divisome by direct interaction with FtsZ, stimulating Z-ring assembly and thereby promoting cell division earlier in the cell cycle. Its recruitment to the Z-ring requires functional FtsA or ZipA. The protein is Cell division protein ZapB of Vibrio atlanticus (strain LGP32) (Vibrio splendidus (strain Mel32)).